We begin with the raw amino-acid sequence, 110 residues long: Large ribosomal subunit protein uL22 (110 aa).

This sequence belongs to the universal ribosomal protein uL22 family. In terms of assembly, part of the 50S ribosomal subunit.

This protein binds specifically to 23S rRNA; its binding is stimulated by other ribosomal proteins, e.g. L4, L17, and L20. It is important during the early stages of 50S assembly. It makes multiple contacts with different domains of the 23S rRNA in the assembled 50S subunit and ribosome. In terms of biological role, the globular domain of the protein is located near the polypeptide exit tunnel on the outside of the subunit, while an extended beta-hairpin is found that lines the wall of the exit tunnel in the center of the 70S ribosome. This Pseudomonas savastanoi pv. phaseolicola (strain 1448A / Race 6) (Pseudomonas syringae pv. phaseolicola (strain 1448A / Race 6)) protein is Large ribosomal subunit protein uL22.